A 542-amino-acid polypeptide reads, in one-letter code: Probable spastin homolog spas-1 (542 aa).

Residues 29-66 are a coiled coil; the sequence is RAAIEMDELTKQNGTINEKLQTAELYKQARQMLKEANE. The segment at 131–177 is disordered; it reads ATVPGDKKVSKVKQTEKAPHVCSRGDRCGAHQPPPEKKSTPLKPVNQ. A compositionally biased stretch (basic and acidic residues) spans 135 to 169; the sequence is GDKKVSKVKQTEKAPHVCSRGDRCGAHQPPPEKKS. 309–316 lines the ATP pocket; that stretch reads GPPGNGKT.

It belongs to the AAA ATPase family. Spastin subfamily. In terms of assembly, homohexamer. The homohexamer is stabilized by ATP-binding. The homohexamer may adopt a ring conformation through which microtubules pass prior to being severed. Interacts with microtubules.

It is found in the cytoplasm. Its subcellular location is the cytoskeleton. The protein resides in the perinuclear region. It catalyses the reaction n ATP + n H2O + a microtubule = n ADP + n phosphate + (n+1) alpha/beta tubulin heterodimers.. Functionally, severs microtubules, probably in an ATP-dependent fashion. The chain is Probable spastin homolog spas-1 (spas-1) from Caenorhabditis briggsae.